The sequence spans 525 residues: MTENIHKHRILILDFGSQYTQLVARRVRELGVYCELWAWDVTEAQIRDFNPSGIILSGGPESTTEENSPRAPQYVFEAGVPVFGVCYGMQTMAMQLGGHVEGSNEREFGYAQVEVLTDSALVRGIEDSLTADGKPLLDVWMSHGDKVTAIPSDFVTVASTESCPFAIMANEEKRFYGVQFHPEVTHTRQGMRMLERFVRDICQCEALWTPAKIIDDAVARIREQVGDDKVILGLSGGVDSSVTAMLLHRAIGKNLTCVFVDNGLLRLNEAEQVMDMFGDHFGLNIVHVPAEERFLSALAGENDPEAKRKIIGRVFVEVFDEEALKLEDVKWLAQGTIYPDVIESAASATGKAHVIKSHHNVGGLPKEMKMGLVEPLKELFKDEVRKIGLELGLPYDMLYRHPFPGPGLGVRVLGEVKKEYCDLLRRADAIFIEELRKADLYDKVSQAFTVFLPVRSVGVMGDGRKYDWVVSLRAVETIDFMTAHWAHLPYDFLGRVSNRIINEVNGISRVVYDISGKPPATIEWE.

The 199-residue stretch at 9 to 207 (RILILDFGSQ…VRDICQCEAL (199 aa)) folds into the Glutamine amidotransferase type-1 domain. Cysteine 86 (nucleophile) is an active-site residue. Residues histidine 181 and glutamate 183 contribute to the active site. The GMPS ATP-PPase domain maps to 208-400 (WTPAKIIDDA…LGLPYDMLYR (193 aa)). 235 to 241 (SGGVDSS) contacts ATP.

As to quaternary structure, homodimer.

It carries out the reaction XMP + L-glutamine + ATP + H2O = GMP + L-glutamate + AMP + diphosphate + 2 H(+). The protein operates within purine metabolism; GMP biosynthesis; GMP from XMP (L-Gln route): step 1/1. Its function is as follows. Catalyzes the synthesis of GMP from XMP. This Salmonella paratyphi B (strain ATCC BAA-1250 / SPB7) protein is GMP synthase [glutamine-hydrolyzing].